A 157-amino-acid chain; its full sequence is Endoribonuclease YbeY (157 aa).

Zn(2+) contacts are provided by H114, H118, and H124.

It belongs to the endoribonuclease YbeY family. The cofactor is Zn(2+).

The protein localises to the cytoplasm. In terms of biological role, single strand-specific metallo-endoribonuclease involved in late-stage 70S ribosome quality control and in maturation of the 3' terminus of the 16S rRNA. The protein is Endoribonuclease YbeY of Yersinia pseudotuberculosis serotype O:1b (strain IP 31758).